We begin with the raw amino-acid sequence, 307 residues long: Ribosomal RNA small subunit methyltransferase H (307 aa).

S-adenosyl-L-methionine-binding positions include 33–35, Asp51, Phe82, Asp96, and Gln103; that span reads GGY.

It belongs to the methyltransferase superfamily. RsmH family.

The protein resides in the cytoplasm. It carries out the reaction cytidine(1402) in 16S rRNA + S-adenosyl-L-methionine = N(4)-methylcytidine(1402) in 16S rRNA + S-adenosyl-L-homocysteine + H(+). Its function is as follows. Specifically methylates the N4 position of cytidine in position 1402 (C1402) of 16S rRNA. The chain is Ribosomal RNA small subunit methyltransferase H from Rickettsia rickettsii (strain Iowa).